The chain runs to 395 residues: Elongation factor Tu (395 aa).

Positions 10–205 constitute a tr-type G domain; the sequence is KPHVNIGTIG…VDNWIPIPPR (196 aa). Residues 19-26 form a G1 region; the sequence is GHVDHGKT. A GTP-binding site is contributed by 19–26; sequence GHVDHGKT. Thr-26 contacts Mg(2+). Residues 60-64 form a G2 region; the sequence is GITIN. A G3 region spans residues 81 to 84; that stretch reads DCPG. GTP is bound by residues 81–85 and 136–139; these read DCPGH and NKVD. Residues 136 to 139 are G4; the sequence is NKVD. The G5 stretch occupies residues 174-176; that stretch reads SAL.

Belongs to the TRAFAC class translation factor GTPase superfamily. Classic translation factor GTPase family. EF-Tu/EF-1A subfamily. As to quaternary structure, monomer.

It is found in the cytoplasm. It carries out the reaction GTP + H2O = GDP + phosphate + H(+). In terms of biological role, GTP hydrolase that promotes the GTP-dependent binding of aminoacyl-tRNA to the A-site of ribosomes during protein biosynthesis. This Hymenobacter ocellatus (Parahymenobacter ocellatus) protein is Elongation factor Tu.